The following is a 198-amino-acid chain: COMM domain-containing protein 9 (198 aa).

Ala-2 is modified (N-acetylalanine). The region spanning 122–196 (RLVDLDWRVD…RIRDQLSAVA (75 aa)) is the COMM domain.

The protein belongs to the COMM domain-containing protein 9 family. As to quaternary structure, component of the commander complex consisting of the CCC subcomplex and the retriever subcomplex. Component of the CCC (COMMD/CCDC22/CCDC93) subcomplex consisting of COMMD1, COMMD2, COMMD3, COMMD4, COMMD5, COMMD6, COMMD7, COMMD8, COMMD9, COMMD10, CCDC22 and CCDC93; within the complex forms a heterodimer with COMMD7. Interacts with RELB and NFKB1/p105. Interacts with CCDC22, CCDC93, SCNN1B, CUL1.

The protein resides in the nucleus. The protein localises to the cytoplasmic vesicle. In terms of biological role, scaffold protein in the commander complex that is essential for endosomal recycling of transmembrane cargos; the commander complex is composed of the CCC subcomplex and the retriever subcomplex. May modulate activity of cullin-RING E3 ubiquitin ligase (CRL) complexes. May down-regulate activation of NF-kappa-B. Modulates Na(+) transport in epithelial cells by regulation of apical cell surface expression of amiloride-sensitive sodium channel (ENaC) subunits. The polypeptide is COMM domain-containing protein 9 (Commd9) (Mus musculus (Mouse)).